The chain runs to 1342 residues: DNA-directed RNA polymerase subunit beta (1342 aa).

This sequence belongs to the RNA polymerase beta chain family. In terms of assembly, the RNAP catalytic core consists of 2 alpha, 1 beta, 1 beta' and 1 omega subunit. When a sigma factor is associated with the core the holoenzyme is formed, which can initiate transcription.

It catalyses the reaction RNA(n) + a ribonucleoside 5'-triphosphate = RNA(n+1) + diphosphate. In terms of biological role, DNA-dependent RNA polymerase catalyzes the transcription of DNA into RNA using the four ribonucleoside triphosphates as substrates. This chain is DNA-directed RNA polymerase subunit beta, found in Citrobacter koseri (strain ATCC BAA-895 / CDC 4225-83 / SGSC4696).